A 132-amino-acid chain; its full sequence is Cliotide T2 (132 aa).

The N-terminal stretch at 1-28 (MAYVRLTSLAVLFFLAASVMLNVKKTEG) is a signal peptide. The segment at residues 29–58 (GEFLKCGESCVQGECYTPGCSCDWPICKKN) is a cross-link (cyclopeptide (Gly-Asn)). Intrachain disulfides connect cysteine 34–cysteine 48, cysteine 38–cysteine 50, and cysteine 43–cysteine 55. A propeptide spans 59–132 (HIIATNAKTV…NLKMPMTIIN (74 aa)) (removed in mature form).

Post-translationally, this is a cyclic peptide. As to expression, expressed in flower, stem, shoot and pod but not in root, leaf, seed and nodule (at protein level).

In terms of biological role, probably participates in a plant defense mechanism. Not active against Gram-negative bacteria E.coli ATCC 700926, K.pneumoniae ATTC 13883 and P.aeruginosa ATCC 39018 at concentration up to 100 uM. Has cytotoxic but no hemolytic activity. The polypeptide is Cliotide T2 (Clitoria ternatea (Butterfly pea)).